A 395-amino-acid chain; its full sequence is MRACQQGRSSSLVSPYMAPKNQSERFAFIAEWYDPNASLLRRYELLFYPTDGSVEMHDVKNRRTFLKRTKYEDLRLEDLFIGNKVNVFSRQLVLIDYGDQYTARQLGSRKEKTLALIKPDAVSKAGEIIEMINKSGFTITKLRMMTLTRKEAADFHVDHHSRPFYNELIQFITSGPVIAMEILRDDAICEWKRLLGPANSGLSRTDAPGSIRALFGTDGVRNAAHGPDTFASAAREMELFFPSSGGCGPANTAKFTNCTCCIIKPHAISEGMLGKILIAIRDACFGMSAIQMFNLDRANVEEFYEVYKGVVSEYNDMVTELCSGPCVAIEIQQSNPTKTFREFCGPADPEIARHLRPETLRAIFGKTKVQNAVHCTDLPEDGLLEVQYFFKILDN.

Positions 22–110 (QSERFAFIAE…YTARQLGSRK (89 aa)) constitute a DM10 domain.

The protein belongs to the NDK family. In terms of assembly, component of sperm flagellar doublet microtubules. Component of the gamma-tubulin ring complex.

It localises to the cytoplasm. The protein resides in the cytoskeleton. The protein localises to the microtubule organizing center. Its subcellular location is the centrosome. It is found in the nucleus. It localises to the spindle. The protein resides in the cilium axoneme. The protein localises to the flagellum axoneme. Its subcellular location is the cell projection. It is found in the cilium. Possesses an intrinsic kinase activity. Displays 3'-5' exonuclease activity with a preference for single-stranded DNA. Does not seem to have nucleoside diphosphate kinase activity. Functional component of the gamma-tubulin ring complex, implicated in the regulation of the microtubule-nucleating activity of the gamma-tubulin ring complex in centrosomes, in a kinase activity-dependent manner. Part of the dynein-decorated doublet microtubules (DMTs) in cilia axoneme, which is required for motile cilia beating. The chain is Nucleoside diphosphate kinase homolog 7 from Mus musculus (Mouse).